Consider the following 228-residue polypeptide: Small ribosomal subunit protein uS3 (228 aa).

A KH type-2 domain is found at 39-107; the sequence is VREFIRERLK…PVHINIEEIR (69 aa).

This sequence belongs to the universal ribosomal protein uS3 family. As to quaternary structure, part of the 30S ribosomal subunit. Forms a tight complex with proteins S10 and S14.

In terms of biological role, binds the lower part of the 30S subunit head. Binds mRNA in the 70S ribosome, positioning it for translation. In Halorhodospira halophila (strain DSM 244 / SL1) (Ectothiorhodospira halophila (strain DSM 244 / SL1)), this protein is Small ribosomal subunit protein uS3.